The sequence spans 496 residues: Glutamyl-tRNA(Gln) amidotransferase subunit A (496 aa).

Active-site charge relay system residues include Lys-75 and Ser-150. The active-site Acyl-ester intermediate is the Ser-174.

Belongs to the amidase family. GatA subfamily. Heterotrimer of A, B and C subunits.

It catalyses the reaction L-glutamyl-tRNA(Gln) + L-glutamine + ATP + H2O = L-glutaminyl-tRNA(Gln) + L-glutamate + ADP + phosphate + H(+). Its function is as follows. Allows the formation of correctly charged Gln-tRNA(Gln) through the transamidation of misacylated Glu-tRNA(Gln) in organisms which lack glutaminyl-tRNA synthetase. The reaction takes place in the presence of glutamine and ATP through an activated gamma-phospho-Glu-tRNA(Gln). The sequence is that of Glutamyl-tRNA(Gln) amidotransferase subunit A from Burkholderia thailandensis (strain ATCC 700388 / DSM 13276 / CCUG 48851 / CIP 106301 / E264).